The primary structure comprises 601 residues: Glutathione-regulated potassium-efflux system protein KefB (601 aa).

13 helical membrane passes run serine 4–alanine 24, isoleucine 29–phenylalanine 49, glutamate 55–leucine 75, isoleucine 87–methionine 107, alanine 115–methionine 135, valine 152–glycine 172, histidine 177–glycine 197, phenylalanine 207–glycine 227, leucine 230–leucine 250, glycine 268–tyrosine 288, leucine 291–leucine 311, methionine 324–alanine 344, and alanine 356–valine 376. Positions lysine 400–threonine 519 constitute an RCK N-terminal domain.

This sequence belongs to the monovalent cation:proton antiporter 2 (CPA2) transporter (TC 2.A.37) family. KefB subfamily. Interacts with the regulatory subunit KefG.

Its subcellular location is the cell inner membrane. Activated by adducts between glutathione and electrophiles. Its function is as follows. Pore-forming subunit of a potassium efflux system that confers protection against electrophiles. Catalyzes K(+)/H(+) antiport. The sequence is that of Glutathione-regulated potassium-efflux system protein KefB from Escherichia coli (strain K12).